The sequence spans 151 residues: Small ribosomal subunit protein bS6 (151 aa).

The disordered stretch occupies residues 98–151 (EESPIQKAEKENRERKNRAERRAAEAAAATETEKSESEESAEEETSTDTTGEEE). The segment covering 135-151 (EESAEEETSTDTTGEEE) has biased composition (acidic residues).

It belongs to the bacterial ribosomal protein bS6 family.

Binds together with bS18 to 16S ribosomal RNA. The polypeptide is Small ribosomal subunit protein bS6 (Teredinibacter turnerae (strain ATCC 39867 / T7901)).